Here is a 78-residue protein sequence, read N- to C-terminus: Short neurotoxin SNTX14 (78 aa).

The first 21 residues, 1–21 (MKTLLLTFLVVTIVCLDLGYT), serve as a signal peptide directing secretion. 4 disulfide bridges follow: cysteine 24/cysteine 40, cysteine 33/cysteine 58, cysteine 62/cysteine 70, and cysteine 71/cysteine 76.

It belongs to the three-finger toxin family. Short-chain subfamily. Expressed by the venom gland.

It localises to the secreted. Functionally, this three-finger toxin binds and inhibits the nicotinic acetylcholine receptor (nAChR). This Ophiophagus hannah (King cobra) protein is Short neurotoxin SNTX14.